Here is a 243-residue protein sequence, read N- to C-terminus: MSETHFGFEKVDEAEKADKVAGVFHSVASKYDVMNDLMSGGMHRLWKMFTIAQAGVRPGHKVLDIAGGTGDLAKAFAKQAGPTGEVWLTDINESMLRVGRDRLLNKGIVTPVCLCDAERIPFPDNHFDLVTVAFGLRNMTHKDAALAEMRRVVKPGGKVMVLEFSKVWKPLEKAYDVYSFKVLPWLGERVAGDAPSYRYLAESIRMHPDQASLVRLMEHAGLENVEYFNLTAGVVALHVGRKY.

S-adenosyl-L-methionine contacts are provided by residues Thr69, Asp90, and 116-117 (DA).

Belongs to the class I-like SAM-binding methyltransferase superfamily. MenG/UbiE family.

The catalysed reaction is a 2-demethylmenaquinol + S-adenosyl-L-methionine = a menaquinol + S-adenosyl-L-homocysteine + H(+). It catalyses the reaction a 2-methoxy-6-(all-trans-polyprenyl)benzene-1,4-diol + S-adenosyl-L-methionine = a 5-methoxy-2-methyl-3-(all-trans-polyprenyl)benzene-1,4-diol + S-adenosyl-L-homocysteine + H(+). It participates in quinol/quinone metabolism; menaquinone biosynthesis; menaquinol from 1,4-dihydroxy-2-naphthoate: step 2/2. Its pathway is cofactor biosynthesis; ubiquinone biosynthesis. Functionally, methyltransferase required for the conversion of demethylmenaquinol (DMKH2) to menaquinol (MKH2) and the conversion of 2-polyprenyl-6-methoxy-1,4-benzoquinol (DDMQH2) to 2-polyprenyl-3-methyl-6-methoxy-1,4-benzoquinol (DMQH2). This chain is Ubiquinone/menaquinone biosynthesis C-methyltransferase UbiE, found in Cupriavidus necator (strain ATCC 17699 / DSM 428 / KCTC 22496 / NCIMB 10442 / H16 / Stanier 337) (Ralstonia eutropha).